Consider the following 181-residue polypeptide: Putative NAD(P)H-dependent FMN-containing oxidoreductase YwqN (181 aa).

It belongs to the SsuE family. The cofactor is FMN.

In terms of biological role, putative NADPH-dependent oxidoreductase. The protein is Putative NAD(P)H-dependent FMN-containing oxidoreductase YwqN (ywqN) of Bacillus subtilis (strain 168).